We begin with the raw amino-acid sequence, 700 residues long: Elongation factor G 2 (700 aa).

The 283-residue stretch at 8-290 folds into the tr-type G domain; it reads ERYRNIGISA…AVIDFLPSPV (283 aa). GTP is bound by residues 17–24, 88–92, and 142–145; these read AHIDAGKT, DTPGH, and NKMD.

Belongs to the TRAFAC class translation factor GTPase superfamily. Classic translation factor GTPase family. EF-G/EF-2 subfamily.

The protein localises to the cytoplasm. Catalyzes the GTP-dependent ribosomal translocation step during translation elongation. During this step, the ribosome changes from the pre-translocational (PRE) to the post-translocational (POST) state as the newly formed A-site-bound peptidyl-tRNA and P-site-bound deacylated tRNA move to the P and E sites, respectively. Catalyzes the coordinated movement of the two tRNA molecules, the mRNA and conformational changes in the ribosome. The protein is Elongation factor G 2 of Burkholderia orbicola (strain AU 1054).